The following is a 345-amino-acid chain: L-erythro-3,5-diaminohexanoate dehydrogenase (345 aa).

It belongs to the KDD family. In terms of assembly, homodimer.

It carries out the reaction (3S,5S)-3,5-diaminohexanoate + NAD(+) + H2O = (5S)-5-amino-3-oxohexanoate + NH4(+) + NADH + H(+). Its pathway is amino-acid degradation; L-lysine degradation via acetate pathway. Functionally, involved in the anaerobic fermentation of lysine. Catalyzes the oxidative deamination of L-erythro-3,5-diaminohexanoate (3,5-DAH) to 3-keto-5-aminohexanoate (KAH). It can use NAD or NADP. This Fusobacterium nucleatum subsp. nucleatum (strain ATCC 25586 / DSM 15643 / BCRC 10681 / CIP 101130 / JCM 8532 / KCTC 2640 / LMG 13131 / VPI 4355) protein is L-erythro-3,5-diaminohexanoate dehydrogenase.